The chain runs to 122 residues: Urease subunit beta (122 aa).

Belongs to the urease beta subunit family. In terms of assembly, heterotrimer of UreA (gamma), UreB (beta) and UreC (alpha) subunits. Three heterotrimers associate to form the active enzyme.

It is found in the cytoplasm. The catalysed reaction is urea + 2 H2O + H(+) = hydrogencarbonate + 2 NH4(+). It functions in the pathway nitrogen metabolism; urea degradation; CO(2) and NH(3) from urea (urease route): step 1/1. This Acetivibrio thermocellus (strain ATCC 27405 / DSM 1237 / JCM 9322 / NBRC 103400 / NCIMB 10682 / NRRL B-4536 / VPI 7372) (Clostridium thermocellum) protein is Urease subunit beta.